A 140-amino-acid chain; its full sequence is Beta/delta-urticatoxin-De2a (140 aa).

The first 18 residues, 1–18, serve as a signal peptide directing secretion; the sequence is MKTSTALVLLLALTATSA. Residues 19-78 constitute a propeptide that is removed on maturation; it reads SSGDHQFIDEQNIMNVAEGKNVISSLSSSGGGDDAAAIMESVLVNGGNRKMVFMMVSGSQ. 6 cysteine pairs are disulfide-bonded: Cys-81–Cys-95, Cys-88–Cys-100, Cys-94–Cys-108, Cys-113–Cys-127, Cys-120–Cys-131, and Cys-126–Cys-139.

Belongs to the urticatoxin-2 family. Expressed in trichomes, that are stiff epidermal hairs located on the surface of petioles and leaves.

Its subcellular location is the secreted. In terms of biological role, plant defense neurotoxin that causes pain and systemic symptoms in mammals via modulation of voltage-gated sodium channels (Nav). Potent modulator of human Nav1.5/SCN5A (EC(50)=55 nM), Nav1.6/SCN8A (EC(50)=0.86 nM), and Nav1.7/SCN9A (EC(50)=208 nM), where it shifts the activation threshold to more negative potentials and delays fast inactivation. Also shifts the voltage-dependence of steady-state fast inactivation of Nav1.6/SCN8A, but not that of Nav1.5/SCN5A or Nav1.7/SCN9A. On Nav1.7/SCN9A, principally acts by binding to extracellular loops of domain IV (Nav site 3). In vivo, intraplantar injection into mice causes numerous dose-dependent, immediate, and long-lasting spontaneous pain behaviors, while no swelling is observed in the injected paw. At the highest doses tested, systemic symptoms including hypokinesia and hypersalivation are observed. This is Beta/delta-urticatoxin-De2a from Dendrocnide excelsa (Giant stinging tree).